The sequence spans 146 residues: 3-dehydroquinate dehydratase (146 aa).

Catalysis depends on Tyr23, which acts as the Proton acceptor. Substrate-binding residues include Asn74, His80, and Asp87. His100 serves as the catalytic Proton donor. Substrate-binding positions include 101-102 (IS) and Arg111.

The protein belongs to the type-II 3-dehydroquinase family. Homododecamer.

The catalysed reaction is 3-dehydroquinate = 3-dehydroshikimate + H2O. Its pathway is metabolic intermediate biosynthesis; chorismate biosynthesis; chorismate from D-erythrose 4-phosphate and phosphoenolpyruvate: step 3/7. Functionally, catalyzes a trans-dehydration via an enolate intermediate. The chain is 3-dehydroquinate dehydratase from Bacillus cereus (strain B4264).